Reading from the N-terminus, the 21-residue chain is Alpha-aminoadipic semialdehyde dehydrogenase (21 aa).

It belongs to the aldehyde dehydrogenase family. Homotetramer.

The enzyme catalyses (S)-2-amino-6-oxohexanoate + NADP(+) + H2O = L-2-aminoadipate + NADPH + 2 H(+). It carries out the reaction (S)-2-amino-6-oxohexanoate + NAD(+) + H2O = L-2-aminoadipate + NADH + 2 H(+). This Ctenopharyngodon idella (Grass carp) protein is Alpha-aminoadipic semialdehyde dehydrogenase (aldh7a1).